Reading from the N-terminus, the 204-residue chain is Putative uracil phosphoribosyltransferase urg2 (204 aa).

5-phospho-alpha-D-ribose 1-diphosphate is bound by residues arginine 75, arginine 100, and 126–134; that span reads DPVMATGGT. Residue tyrosine 187 participates in D-ribose 5-phosphate binding. Uracil-binding positions include leucine 188 and 193-195; that span reads GDI. Residue aspartate 194 coordinates 5-phospho-alpha-D-ribose 1-diphosphate.

Belongs to the UPRTase family. Mg(2+) serves as cofactor.

Its subcellular location is the cytoplasm. It is found in the nucleus. The enzyme catalyses UMP + diphosphate = 5-phospho-alpha-D-ribose 1-diphosphate + uracil. It participates in pyrimidine metabolism; UMP biosynthesis via salvage pathway; UMP from uracil: step 1/1. With respect to regulation, allosterically activated by GTP. Functionally, catalyzes the conversion of uracil and 5-phospho-alpha-D-ribose 1-diphosphate (PRPP) to UMP and diphosphate. The protein is Putative uracil phosphoribosyltransferase urg2 of Schizosaccharomyces pombe (strain 972 / ATCC 24843) (Fission yeast).